A 148-amino-acid chain; its full sequence is Lysozyme-like protein 2 (148 aa).

A signal peptide spans 1 to 19; sequence MKAAGILTLIGCLVTGAES. Residues 20 to 148 form the C-type lysozyme domain; it reads KIYTRCKLAK…SDWKKDCEVS (129 aa). Cystine bridges form between Cys25–Cys145, Cys49–Cys133, Cys83–Cys98, and Cys94–Cys112. Glu54 is an active-site residue. Asn58 carries N-linked (GlcNAc...) asparagine glycosylation. Residue Asp71 is part of the active site.

Belongs to the glycosyl hydrolase 22 family. In terms of assembly, monomer. Expressed in testis, epididymis and placenta.

It localises to the secreted. The catalysed reaction is Hydrolysis of (1-&gt;4)-beta-linkages between N-acetylmuramic acid and N-acetyl-D-glucosamine residues in a peptidoglycan and between N-acetyl-D-glucosamine residues in chitodextrins.. This is Lysozyme-like protein 2 (LYZL2) from Homo sapiens (Human).